We begin with the raw amino-acid sequence, 454 residues long: Noelin-2 (454 aa).

Positions 1–20 (MWPLTVPPPLLLLLCSGLAG) are cleaved as a signal peptide. Coiled coils occupy residues 58–85 (RDGR…LELR) and 136–193 (LEQY…AQKL). Asparagine 74, asparagine 155, asparagine 275, asparagine 310, asparagine 399, and asparagine 441 each carry an N-linked (GlcNAc...) asparagine glycan. Residues 194–446 (GCGKLTGVSN…QVLYNVTLFH (253 aa)) form the Olfactomedin-like domain. A disulfide bond links cysteine 195 and cysteine 377.

In terms of assembly, peripherally associated with AMPAR complex. AMPAR complex consists of an inner core made of 4 pore-forming GluA/GRIA proteins (GRIA1, GRIA2, GRIA3 and GRIA4) and 4 major auxiliary subunits arranged in a twofold symmetry. One of the two pairs of distinct binding sites is occupied either by CNIH2, CNIH3 or CACNG2, CACNG3. The other harbors CACNG2, CACNG3, CACNG4, CACNG8 or GSG1L. This inner core of AMPAR complex is complemented by outer core constituents binding directly to the GluA/GRIA proteins at sites distinct from the interaction sites of the inner core constituents. Outer core constituents include at least PRRT1, PRRT2, CKAMP44/SHISA9, FRRS1L and NRN1. The proteins of the inner and outer core serve as a platform for other, more peripherally associated AMPAR constituents, including OLFM2. Alone or in combination, these auxiliary subunits control the gating and pharmacology of the AMPAR complex and profoundly impact their biogenesis and protein processing. Interacts with GRIA2. Interacts with OLFM1 and OLFM3. Interacts with SRF; the interaction promotes dissociation of SRF from the transcriptional repressor HEY2. Interacts with RUNX2. In terms of processing, N-glycosylated. In terms of tissue distribution, expressed in aortic smooth muscle (at protein level). In the fetus, expressed in the brain and ocular tissues including lens vesicle and optic cup.

It localises to the secreted. The protein resides in the synapse. Its subcellular location is the membrane. The protein localises to the nucleus. It is found in the cytoplasm. Involved in transforming growth factor beta (TGF-beta)-induced smooth muscle differentiation. TGF-beta induces expression and translocation of OLFM2 to the nucleus where it binds to SRF, causing its dissociation from the transcriptional repressor HEY2/HERP1 and facilitating binding of SRF to target genes. Plays a role in AMPAR complex organization. Is a regulator of vascular smooth-muscle cell (SMC) phenotypic switching, that acts by promoting RUNX2 and inhibiting MYOCD binding to SRF. SMC phenotypic switching is the process through which vascular SMCs undergo transition between a quiescent contractile phenotype and a proliferative synthetic phenotype in response to pathological stimuli. SMC phenotypic plasticity is essential for vascular development and remodeling. This is Noelin-2 (OLFM2) from Homo sapiens (Human).